A 406-amino-acid polypeptide reads, in one-letter code: 4-hydroxy-3-methylbut-2-en-1-yl diphosphate synthase (ferredoxin) (406 aa).

Residues Cys314, Cys317, Cys348, and Glu355 each coordinate [4Fe-4S] cluster.

Belongs to the IspG family. It depends on [4Fe-4S] cluster as a cofactor.

The enzyme catalyses (2E)-4-hydroxy-3-methylbut-2-enyl diphosphate + 2 oxidized [2Fe-2S]-[ferredoxin] + H2O = 2-C-methyl-D-erythritol 2,4-cyclic diphosphate + 2 reduced [2Fe-2S]-[ferredoxin] + H(+). The protein operates within isoprenoid biosynthesis; isopentenyl diphosphate biosynthesis via DXP pathway; isopentenyl diphosphate from 1-deoxy-D-xylulose 5-phosphate: step 5/6. Converts 2C-methyl-D-erythritol 2,4-cyclodiphosphate (ME-2,4cPP) into 1-hydroxy-2-methyl-2-(E)-butenyl 4-diphosphate. The protein is 4-hydroxy-3-methylbut-2-en-1-yl diphosphate synthase (ferredoxin) of Prochlorococcus marinus (strain MIT 9313).